A 1084-amino-acid polypeptide reads, in one-letter code: AP-3 complex subunit beta-1 (1084 aa).

Positions 1-11 are enriched in polar residues; sequence MSSNSFAYNEQ. Residues 1 to 26 form a disordered region; sequence MSSNSFAYNEQSGGGEATELGQEATS. A phosphoserine mark is found at S276 and S609. The segment at 663–800 is disordered; sequence AGKAKKENPD…KEKKTKQERN (138 aa). A compositionally biased stretch (basic and acidic residues) spans 666–677; sequence AKKENPDKKFYS. The span at 678 to 717 shows a compositional bias: acidic residues; that stretch reads ESEEEEDSSESSSDSESESGSESGEDEEDDRSGDSAEDSG. Residues 718-729 show a composition bias toward low complexity; sequence ESGSEPEAGKGR. A compositionally biased stretch (basic and acidic residues) spans 738-753; the sequence is GRGDSKDVDKEKENSK. S742 carries the post-translational modification Phosphoserine. The span at 754-767 shows a compositional bias: low complexity; it reads TSESSSGESSSIEE. Acidic residues predominate over residues 768–781; it reads SSSDSESESESESE. Basic and acidic residues predominate over residues 782–800; it reads SESRKVTKEKEKKTKQERN.

Belongs to the adaptor complexes large subunit family. Adaptor protein complex 3 (AP-3) is a heterotetramer composed of two large adaptins (delta-type subunit AP3D1 and beta-type subunit AP3B1 or AP3B2), a medium adaptin (mu-type subunit AP3M1 or AP3M2) and a small adaptin (sigma-type subunit APS1 or AP3S2). AP-3 associates with the BLOC-1 complex. Interacts with KIF3A; interaction is direct; interaction is impaired by pyrophosphorylation of AP3B1. In terms of processing, phosphorylated on serine residues. Pyrophosphorylation by 5-diphosphoinositol pentakisphosphate (5-IP7) impairs interaction with KIF3A. Serine pyrophosphorylation is achieved by Mg(2+)-dependent, but enzyme independent transfer of a beta-phosphate from a inositol pyrophosphate to a pre-phosphorylated serine residue.

The protein localises to the cytoplasmic vesicle. The protein resides in the clathrin-coated vesicle membrane. It is found in the golgi apparatus. Functionally, subunit of non-clathrin- and clathrin-associated adaptor protein complex 3 (AP-3) that plays a role in protein sorting in the late-Golgi/trans-Golgi network (TGN) and/or endosomes. The AP complexes mediate both the recruitment of clathrin to membranes and the recognition of sorting signals within the cytosolic tails of transmembrane cargo molecules. AP-3 appears to be involved in the sorting of a subset of transmembrane proteins targeted to lysosomes and lysosome-related organelles. In concert with the BLOC-1 complex, AP-3 is required to target cargos into vesicles assembled at cell bodies for delivery into neurites and nerve terminals. This Bos taurus (Bovine) protein is AP-3 complex subunit beta-1 (AP3B1).